The chain runs to 876 residues: Leucine--tRNA ligase (876 aa).

The 'HIGH' region motif lies at 43–53 (PYPSGRIHIGH). Positions 632–636 (KMSKS) match the 'KMSKS' region motif. Residue Lys-635 participates in ATP binding.

Belongs to the class-I aminoacyl-tRNA synthetase family.

It is found in the cytoplasm. It catalyses the reaction tRNA(Leu) + L-leucine + ATP = L-leucyl-tRNA(Leu) + AMP + diphosphate. The chain is Leucine--tRNA ligase from Allorhizobium ampelinum (strain ATCC BAA-846 / DSM 112012 / S4) (Agrobacterium vitis (strain S4)).